Consider the following 271-residue polypeptide: Cell surface glycoprotein CD200 receptor 2 (271 aa).

A signal peptide spans 1 to 23 (MSAPRLLISIIIMVSASSSSCMG). Residues 24–239 (GKQMTQNYST…TSGSPALSLL (216 aa)) lie on the Extracellular side of the membrane. N-linked (GlcNAc...) asparagine glycosylation is found at Asn-30, Asn-39, Asn-86, Asn-92, Asn-189, and Asn-217. The 87-residue stretch at 46-132 (MDINAVLCCP…YRGIVVTPDG (87 aa)) folds into the Ig-like V-type domain. Residues 133 to 221 (NFHRGYHLQV…SHLTGNKSLS (89 aa)) enclose the Ig-like C2-type domain. The cysteines at positions 160 and 209 are disulfide-linked. Residues 240-260 (IILYVKLSLFVVILVTTGFVF) traverse the membrane as a helical segment. Residues 261 to 271 (FQRINHVRKVL) lie on the Cytoplasmic side of the membrane.

It belongs to the CD200R family.

Its subcellular location is the membrane. Functionally, may be a receptor for the CD200/OX2 cell surface glycoprotein. This chain is Cell surface glycoprotein CD200 receptor 2 (CD200R1L), found in Homo sapiens (Human).